The sequence spans 542 residues: CTP synthase (542 aa).

Residues 1–265 form an amidoligase domain region; that stretch reads MARYIFITGG…DQEVLAAFGI (265 aa). A CTP-binding site is contributed by Ser-13. Residue Ser-13 participates in UTP binding. Residue 14-19 participates in ATP binding; it reads SLGKGL. Tyr-54 contributes to the L-glutamine binding site. ATP is bound at residue Asp-71. 2 residues coordinate Mg(2+): Asp-71 and Glu-139. CTP contacts are provided by residues 146 to 148, 186 to 191, and Lys-222; these read DIE and KTKPTQ. UTP-binding positions include 186 to 191 and Lys-222; that span reads KTKPTQ. Residue 238 to 240 coordinates ATP; that stretch reads RDV. A Glutamine amidotransferase type-1 domain is found at 291–541; sequence TIAIVGKYTG…IAAALEQSRL (251 aa). L-glutamine is bound at residue Gly-353. Cys-380 (nucleophile; for glutamine hydrolysis) is an active-site residue. Residues 381–384, Glu-404, and Arg-469 contribute to the L-glutamine site; that span reads FGMQ. Active-site residues include His-514 and Glu-516.

Belongs to the CTP synthase family. As to quaternary structure, homotetramer.

It carries out the reaction UTP + L-glutamine + ATP + H2O = CTP + L-glutamate + ADP + phosphate + 2 H(+). It catalyses the reaction L-glutamine + H2O = L-glutamate + NH4(+). The catalysed reaction is UTP + NH4(+) + ATP = CTP + ADP + phosphate + 2 H(+). Its pathway is pyrimidine metabolism; CTP biosynthesis via de novo pathway; CTP from UDP: step 2/2. With respect to regulation, allosterically activated by GTP, when glutamine is the substrate; GTP has no effect on the reaction when ammonia is the substrate. The allosteric effector GTP functions by stabilizing the protein conformation that binds the tetrahedral intermediate(s) formed during glutamine hydrolysis. Inhibited by the product CTP, via allosteric rather than competitive inhibition. Its function is as follows. Catalyzes the ATP-dependent amination of UTP to CTP with either L-glutamine or ammonia as the source of nitrogen. Regulates intracellular CTP levels through interactions with the four ribonucleotide triphosphates. The sequence is that of CTP synthase from Methylocella silvestris (strain DSM 15510 / CIP 108128 / LMG 27833 / NCIMB 13906 / BL2).